A 526-amino-acid chain; its full sequence is Microphthalmia-associated transcription factor (526 aa).

S5 is subject to Phosphoserine; by MTOR. Disordered regions lie at residues 20–54 (EPKT…STMT) and 155–179 (VLSS…SAPN). Over residues 34–44 (SSSSAEHSGAS) the composition is skewed to low complexity. Phosphoserine; by MAPK is present on S180. The segment at 224-291 (DDVIDDIISL…PANLPNIKRE (68 aa)) is transactivation. Phosphoserine is present on S280. Residue K289 forms a Glycyl lysine isopeptide (Lys-Gly) (interchain with G-Cter in SUMO) linkage. The bHLH domain occupies 311 to 364 (QKKDNHNLIERRRRFNINDRIKELGTLIPKSNDPDMRWNKGTILKASVDYIRKL). Residues 355–401 (KASVDYIRKLQREQQRAKDLENRQKKLEHANRHLLLRVQELEMQARA) are a coiled coil. The leucine-zipper stretch occupies residues 374–395 (LENRQKKLEHANRHLLLRVQEL). Positions 401 to 431 (AHGLSLIPSTGLCSPDLVNRIIKQEPVLENC) are DNA-binding regulation. Residue S405 is modified to Phosphoserine; by GSK3. S414 carries the post-translational modification Phosphoserine. K423 participates in a covalent cross-link: Glycyl lysine isopeptide (Lys-Gly) (interchain with G-Cter in SUMO). Phosphoserine is present on S491. The segment at 496 to 526 (TDPLLSSVSPGASKTSSRRSSMSAEETEHAC) is disordered. Over residues 507 to 519 (ASKTSSRRSSMSA) the composition is skewed to low complexity. S516 carries the phosphoserine; by RPS6KA1 modification.

This sequence belongs to the MiT/TFE family. As to quaternary structure, homodimer or heterodimer; dimerization is mediated via the coiled coil region. Efficient DNA binding requires dimerization with another bHLH protein. Binds DNA in the form of homodimer or heterodimer with either TFE3, TFEB or TFEC. Interacts with small GTPases Rag (RagA/RRAGA, RagB/RRAGB, RagC/RRAGC and/or RagD/RRAGD); promoting its recruitment to lysosomal membrane in the presence of nutrients. Interacts with KARS1. Identified in a complex with HINT1 and CTNNB1. Interacts with VSX2. When nutrients are present, phosphorylation by MTOR at Ser-5 via non-canonical mTORC1 pathway promotes ubiquitination by the SCF(BTRC) complex, followed by degradation. Phosphorylation at Ser-405 significantly enhances the ability to bind the tyrosinase promoter. Phosphorylation by MARK3/cTAK1 at Ser-280 promotes association with 14-3-3/YWHA adapters and retention in the cytosol. Phosphorylated at Ser-180 and Ser-516 following KIT signaling, triggering a short live activation: Phosphorylation at Ser-180 and Ser-516 by MAPK and RPS6KA1, respectively, activate the transcription factor activity but also promote ubiquitination and subsequent degradation by the proteasome. Phosphorylated in response to blue light (415nm). In terms of processing, ubiquitinated by the SCF(BTRC) and SCF(FBXW11) complexes following phosphorylation ar Ser-5 by MTOR, leading to its degradation by the proteasome. Ubiquitinated following phosphorylation at Ser-180, leading to subsequent degradation by the proteasome. Deubiquitinated by USP13, preventing its degradation. As to expression, in the adult, expressed at high levels in the heart, skin, skeletal muscle, intestine, stomach, kidney, ovary, lung, spleen and brain. In the embryo, expressed in developing eye, ear, skin and heart. Isoform M is expressed in melanocytes and also in the embryonic and adult heart while isoform A and isoform H are more widely expressed.

The protein localises to the nucleus. It is found in the cytoplasm. It localises to the lysosome membrane. Its function is as follows. Transcription factor that acts as a master regulator of melanocyte survival and differentiation as well as melanosome biogenesis. Binds to M-boxes (5'-TCATGTG-3') and symmetrical DNA sequences (E-boxes) (5'-CACGTG-3') found in the promoter of pigmentation genes, such as tyrosinase (TYR). Involved in the cellular response to amino acid availability by acting downstream of MTOR: in the presence of nutrients, MITF phosphorylation by MTOR promotes its inactivation. Upon starvation or lysosomal stress, inhibition of MTOR induces MITF dephosphorylation, resulting in transcription factor activity. Plays an important role in melanocyte development by regulating the expression of tyrosinase (TYR) and tyrosinase-related protein 1 (TYRP1). Plays a critical role in the differentiation of various cell types, such as neural crest-derived melanocytes, mast cells, osteoclasts and optic cup-derived retinal pigment epithelium. This Mus musculus (Mouse) protein is Microphthalmia-associated transcription factor (Mitf).